Here is a 107-residue protein sequence, read N- to C-terminus: UPF0145 protein Ent638_1382 (107 aa).

Belongs to the UPF0145 family.

This Enterobacter sp. (strain 638) protein is UPF0145 protein Ent638_1382.